We begin with the raw amino-acid sequence, 71 residues long: Large ribosomal subunit protein uL29 (71 aa).

It belongs to the universal ribosomal protein uL29 family.

The sequence is that of Large ribosomal subunit protein uL29 from Rickettsia akari (strain Hartford).